The following is a 247-amino-acid chain: Carboxy-S-adenosyl-L-methionine synthase (247 aa).

S-adenosyl-L-methionine is bound by residues tyrosine 39, 64–66 (GCS), 89–90 (DN), 117–118 (DI), asparagine 132, and arginine 199.

This sequence belongs to the class I-like SAM-binding methyltransferase superfamily. Cx-SAM synthase family. As to quaternary structure, homodimer.

The enzyme catalyses prephenate + S-adenosyl-L-methionine = carboxy-S-adenosyl-L-methionine + 3-phenylpyruvate + H2O. Functionally, catalyzes the conversion of S-adenosyl-L-methionine (SAM) to carboxy-S-adenosyl-L-methionine (Cx-SAM). The polypeptide is Carboxy-S-adenosyl-L-methionine synthase (Citrobacter koseri (strain ATCC BAA-895 / CDC 4225-83 / SGSC4696)).